The primary structure comprises 264 residues: Thymidylate synthase (264 aa).

R21 provides a ligand contact to dUMP. (6R)-5,10-methylene-5,6,7,8-tetrahydrofolate is bound at residue H51. Residue 126–127 (RR) coordinates dUMP. C146 functions as the Nucleophile in the catalytic mechanism. Residues 166-169 (RSCD), N177, and 207-209 (HLY) each bind dUMP. Residue D169 coordinates (6R)-5,10-methylene-5,6,7,8-tetrahydrofolate. A263 is a (6R)-5,10-methylene-5,6,7,8-tetrahydrofolate binding site.

It belongs to the thymidylate synthase family. Bacterial-type ThyA subfamily. Homodimer.

Its subcellular location is the cytoplasm. It carries out the reaction dUMP + (6R)-5,10-methylene-5,6,7,8-tetrahydrofolate = 7,8-dihydrofolate + dTMP. The protein operates within pyrimidine metabolism; dTTP biosynthesis. Functionally, catalyzes the reductive methylation of 2'-deoxyuridine-5'-monophosphate (dUMP) to 2'-deoxythymidine-5'-monophosphate (dTMP) while utilizing 5,10-methylenetetrahydrofolate (mTHF) as the methyl donor and reductant in the reaction, yielding dihydrofolate (DHF) as a by-product. This enzymatic reaction provides an intracellular de novo source of dTMP, an essential precursor for DNA biosynthesis. This is Thymidylate synthase from Yersinia pestis bv. Antiqua (strain Antiqua).